A 352-amino-acid chain; its full sequence is UDP-N-acetylglucosamine--N-acetylmuramyl-(pentapeptide) pyrophosphoryl-undecaprenol N-acetylglucosamine transferase (352 aa).

Serine 195 and glutamine 287 together coordinate UDP-N-acetyl-alpha-D-glucosamine.

This sequence belongs to the glycosyltransferase 28 family. MurG subfamily.

The protein localises to the cell membrane. The catalysed reaction is Mur2Ac(oyl-L-Ala-gamma-D-Glu-L-Lys-D-Ala-D-Ala)-di-trans,octa-cis-undecaprenyl diphosphate + UDP-N-acetyl-alpha-D-glucosamine = beta-D-GlcNAc-(1-&gt;4)-Mur2Ac(oyl-L-Ala-gamma-D-Glu-L-Lys-D-Ala-D-Ala)-di-trans,octa-cis-undecaprenyl diphosphate + UDP + H(+). It participates in cell wall biogenesis; peptidoglycan biosynthesis. Cell wall formation. Catalyzes the transfer of a GlcNAc subunit on undecaprenyl-pyrophosphoryl-MurNAc-pentapeptide (lipid intermediate I) to form undecaprenyl-pyrophosphoryl-MurNAc-(pentapeptide)GlcNAc (lipid intermediate II). This Streptococcus pneumoniae (strain 70585) protein is UDP-N-acetylglucosamine--N-acetylmuramyl-(pentapeptide) pyrophosphoryl-undecaprenol N-acetylglucosamine transferase.